An 87-amino-acid chain; its full sequence is Small ribosomal subunit protein bS20 (87 aa).

Positions 1-26 are disordered; it reads MANTKSALKRIRQTATRTARNRAVTS. A compositionally biased stretch (low complexity) spans 13–23; sequence QTATRTARNRA.

This sequence belongs to the bacterial ribosomal protein bS20 family.

In terms of biological role, binds directly to 16S ribosomal RNA. This is Small ribosomal subunit protein bS20 from Akkermansia muciniphila (strain ATCC BAA-835 / DSM 22959 / JCM 33894 / BCRC 81048 / CCUG 64013 / CIP 107961 / Muc).